The sequence spans 154 residues: Nuclear cap-binding protein subunit 2 (154 aa).

Residues Tyr-10, Tyr-33, 102–106 (RVDWD), 113–117 (RQYGR), and 123–124 (QV) each bind mRNA. The region spanning 30-108 (CTLYVGNLSF…RLIRVDWDAG (79 aa)) is the RRM domain.

It belongs to the RRM NCBP2 family. In terms of assembly, component of the nuclear cap-binding complex (CBC), a heterodimer composed of Cbp80 and Cbp20 that interacts with m7GpppG-capped RNA. Interacts with Ars2.

The protein localises to the nucleus. In terms of biological role, component of the cap-binding complex (CBC), which binds co-transcriptionally to the 5' cap of pre-mRNAs and is involved in various processes such as pre-mRNA splicing and RNA-mediated gene silencing (RNAi). The CBC complex is involved in miRNA-mediated RNA interference via its interaction with Ars2 and is required for primary microRNAs (miRNAs) processing. Also involved in innate immunity via the short interfering RNAs (siRNAs) processing machinery by restricting the viral RNA production. In the CBC complex, Cbp20 recognizes and binds capped RNAs (m7GpppG-capped RNA) but requires Cbp80 to stabilize the movement of its N-terminal loop and lock the CBC into a high affinity cap-binding state with the cap structure. The polypeptide is Nuclear cap-binding protein subunit 2 (Cbp20) (Drosophila yakuba (Fruit fly)).